The chain runs to 186 residues: MVQVWYMDTEETDQRLEHHRNPPAYLELDDLYQKTGVEYFKINADEYQSDNTLTELRAKRGYTYDDEITCSEKCLPDYANKLKAFFTEHLHTDEEIRLILEGSGYFDVRDNEDNWLRIKVVKGDLIIIPAGIYHRFTLDTNNFIRTRRYFVGEPVWAPHNRPADEMDCRKSYIKHQSENFVQFNKV.

Fe(2+) is bound by residues His89, His91, Glu95, and His134. The Ni(2+) site is built by His89, His91, Glu95, and His134.

This sequence belongs to the acireductone dioxygenase (ARD) family. It depends on Fe(2+) as a cofactor. Ni(2+) serves as cofactor.

It is found in the cytoplasm. The protein resides in the nucleus. It carries out the reaction 1,2-dihydroxy-5-(methylsulfanyl)pent-1-en-3-one + O2 = 4-methylsulfanyl-2-oxobutanoate + formate + 2 H(+). The catalysed reaction is 1,2-dihydroxy-5-(methylsulfanyl)pent-1-en-3-one + O2 = 3-(methylsulfanyl)propanoate + CO + formate + 2 H(+). It participates in amino-acid biosynthesis; L-methionine biosynthesis via salvage pathway; L-methionine from S-methyl-5-thio-alpha-D-ribose 1-phosphate: step 5/6. Catalyzes 2 different reactions between oxygen and the acireductone 1,2-dihydroxy-3-keto-5-methylthiopentene (DHK-MTPene) depending upon the metal bound in the active site. Fe-containing acireductone dioxygenase (Fe-ARD) produces formate and 2-keto-4-methylthiobutyrate (KMTB), the alpha-ketoacid precursor of methionine in the methionine recycle pathway. Ni-containing acireductone dioxygenase (Ni-ARD) produces methylthiopropionate, carbon monoxide and formate, and does not lie on the methionine recycle pathway. The chain is Acireductone dioxygenase from Drosophila melanogaster (Fruit fly).